Reading from the N-terminus, the 409-residue chain is Carbamoyl phosphate synthase arginine-specific small chain (409 aa).

The Glutamine amidotransferase type-1 domain maps to 197-389 (NVALIDCGVK…FDNMSQYRAL (193 aa)). The active-site Nucleophile is Cys-277. Residues His-362 and Glu-364 contribute to the active site.

Belongs to the CarA family. Heterodimer composed of 2 chains; the small (or glutamine) chain promotes the hydrolysis of glutamine to ammonia, which is used by the large (or ammonia) chain to synthesize carbamoyl phosphate.

It is found in the cytoplasm. It carries out the reaction hydrogencarbonate + L-glutamine + 2 ATP + H2O = carbamoyl phosphate + L-glutamate + 2 ADP + phosphate + 2 H(+). The catalysed reaction is L-glutamine + H2O = L-glutamate + NH4(+). It functions in the pathway amino-acid biosynthesis; L-arginine biosynthesis; carbamoyl phosphate from bicarbonate: step 1/1. Functionally, small subunit of the arginine-specific carbamoyl phosphate synthase (CPSase). CPSase catalyzes the formation of carbamoyl phosphate from the ammonia moiety of glutamine, carbonate, and phosphate donated by ATP, constituting the first step of 2 biosynthetic pathways, one leading to arginine and/or urea and the other to pyrimidine nucleotides. The small subunit (glutamine amidotransferase) binds and cleaves glutamine to supply the large subunit with the substrate ammonia. This Kluyveromyces lactis (strain ATCC 8585 / CBS 2359 / DSM 70799 / NBRC 1267 / NRRL Y-1140 / WM37) (Yeast) protein is Carbamoyl phosphate synthase arginine-specific small chain (CPA1).